The sequence spans 698 residues: Sialic acid-binding Ig-like lectin 11 (698 aa).

The N-terminal stretch at 1–27 (MVPGQAQPQSPEMLLLPLLLPVLGAGS) is a signal peptide. At 28–561 (LNKDPSYSLQ…KLEHGGGLGL (534 aa)) the chain is on the extracellular side. Residues 31–134 (DPSYSLQVQR…DEAWYFFRVE (104 aa)) enclose the Ig-like V-type domain. 3 cysteine pairs are disulfide-bonded: Cys49–Cys186, Cys54–Cys114, and Cys177–Cys228. N-linked (GlcNAc...) asparagine glycosylation is found at Asn55 and Asn90. Arg132 contributes to the N-acetylneuraminate binding site. Ig-like C2-type domains follow at residues 159-244 (PDVY…RTVR), 251-350 (PKDL…LDLS), and 355-452 (PENL…LSLS). Residue Asn262 is glycosylated (N-linked (GlcNAc...) asparagine). A disulfide bridge links Cys287 with Cys334. N-linked (GlcNAc...) asparagine glycosylation is found at Asn366 and Asn375. Cys391 and Cys436 form a disulfide bridge. Residues Asn497 and Asn515 are each glycosylated (N-linked (GlcNAc...) asparagine). A helical membrane pass occupies residues 562 to 584 (GAALGAGVAALLAFCSCLVVFRV). The Cytoplasmic portion of the chain corresponds to 585-698 (KICRKEARKR…EREMSGMVPK (114 aa)). The tract at residues 596–635 (AAEQDVPSTLGPISQGHQHECSAGSSQDHPPPGAATYTPG) is disordered. Residues 642–647 (LHYASL) carry the ITIM motif motif. Phosphotyrosine is present on Tyr668. Residues 675–698 (TGQPLRGPGFGLQLEREMSGMVPK) form a disordered region.

Belongs to the immunoglobulin superfamily. SIGLEC (sialic acid binding Ig-like lectin) family. As to quaternary structure, interacts with PTPN6/SHP-1 and PTPN11/SHP-2 upon phosphorylation. Phosphorylated on tyrosine residues. Expressed by macrophages in various tissues including Kupffer cells. Also found in brain microglia.

Its subcellular location is the membrane. Functionally, putative adhesion molecule that mediates sialic-acid dependent binding to cells. Preferentially binds to alpha-2,8-linked sialic acid. The sialic acid recognition site may be masked by cis interactions with sialic acids on the same cell surface. In the immune response, may act as an inhibitory receptor upon ligand induced tyrosine phosphorylation by recruiting cytoplasmic phosphatase(s) via their SH2 domain(s) that block signal transduction through dephosphorylation of signaling molecules. This Homo sapiens (Human) protein is Sialic acid-binding Ig-like lectin 11 (SIGLEC11).